Consider the following 143-residue polypeptide: UPF0251 protein Rru_A1194 (143 aa).

Residues 100–143 form a disordered region; that stretch reads LDGSACPNRRQRRGPCARRGAAGALARQTGDEPPSSPTDNEKDD. The span at 116-126 shows a compositional bias: low complexity; that stretch reads ARRGAAGALAR.

The protein belongs to the UPF0251 family.

In Rhodospirillum rubrum (strain ATCC 11170 / ATH 1.1.1 / DSM 467 / LMG 4362 / NCIMB 8255 / S1), this protein is UPF0251 protein Rru_A1194.